The sequence spans 301 residues: Probable deoxyhypusine synthase 1 (301 aa).

The Nucleophile role is filled by Lys-269.

Belongs to the deoxyhypusine synthase family. Requires NAD(+) as cofactor.

The enzyme catalyses [eIF5A protein]-L-lysine + spermidine = [eIF5A protein]-deoxyhypusine + propane-1,3-diamine. It functions in the pathway protein modification; eIF5A hypusination. Catalyzes the NAD-dependent oxidative cleavage of spermidine and the subsequent transfer of the butylamine moiety of spermidine to the epsilon-amino group of a specific lysine residue of the eIF-5A precursor protein to form the intermediate deoxyhypusine residue. The sequence is that of Probable deoxyhypusine synthase 1 (dys1) from Archaeoglobus fulgidus (strain ATCC 49558 / DSM 4304 / JCM 9628 / NBRC 100126 / VC-16).